Here is a 208-residue protein sequence, read N- to C-terminus: Large ribosomal subunit protein uL4 (208 aa).

The disordered stretch occupies residues 49 to 78; the sequence is HKAKTRAEVRGGGKKPFRQKGTGNARQGST. The span at 69–78 shows a compositional bias: polar residues; that stretch reads GTGNARQGST.

The protein belongs to the universal ribosomal protein uL4 family. In terms of assembly, part of the 50S ribosomal subunit.

In terms of biological role, one of the primary rRNA binding proteins, this protein initially binds near the 5'-end of the 23S rRNA. It is important during the early stages of 50S assembly. It makes multiple contacts with different domains of the 23S rRNA in the assembled 50S subunit and ribosome. Its function is as follows. Forms part of the polypeptide exit tunnel. This chain is Large ribosomal subunit protein uL4, found in Chlorobaculum tepidum (strain ATCC 49652 / DSM 12025 / NBRC 103806 / TLS) (Chlorobium tepidum).